The chain runs to 86 residues: Neurotoxin-like protein pMD18-NTL1/2/4/5 (86 aa).

The N-terminal stretch at 1-21 (MKTLLLTLVVLTIACLDLGYT) is a signal peptide. Cystine bridges form between Cys-24–Cys-45, Cys-38–Cys-62, Cys-66–Cys-78, and Cys-79–Cys-84.

The protein belongs to the three-finger toxin family. Short-chain subfamily. Orphan group IX sub-subfamily. In terms of tissue distribution, expressed by the venom gland.

It is found in the secreted. This Bungarus multicinctus (Many-banded krait) protein is Neurotoxin-like protein pMD18-NTL1/2/4/5.